A 149-amino-acid polypeptide reads, in one-letter code: MESLYRVPFLVLECPNLKLKKPPWVHMPSAMTVYALVVVSYFLITGGIIYDVIVEPPSVGSVTDEHGHQRPVAFLAYRVNGQYIMEGLASSFLFTMGGLGFIILDRSNAPNIPKLNRFLLLFIGFVCVLLSFFMARVFMRMKLPGYLMG.

The Cytoplasmic segment spans residues Met-1 to Thr-32. A helical transmembrane segment spans residues Val-33 to Ile-53. At Val-54 to Tyr-83 the chain is on the extracellular side. Residues Ile-84–Leu-104 traverse the membrane as a helical segment. Residues Asp-105–Arg-117 are Cytoplasmic-facing. A helical membrane pass occupies residues Phe-118–Phe-138. Topologically, residues Met-139–Gly-149 are extracellular.

It belongs to the OSTC family. Component of STT3A-containing oligosaccharyl transferase (OST-A) complex. STT3A-containing complex assembly occurs through the formation of 3 subcomplexes. Subcomplex 1 contains RPN1 and TMEM258, subcomplex 2 contains the STT3A-specific subunits STT3A, DC2/OSTC, and KCP2 as well as the core subunit OST4, and subcomplex 3 contains RPN2, DAD1, and OST48. The OST-A complex can form stable complexes with the Sec61 complex or with both the Sec61 and TRAP complexes. Interacts with PSEN1 and NCSTN; indicative for an association with the gamma-secretase complex.

It localises to the endoplasmic reticulum. The protein resides in the membrane. It participates in protein modification; protein glycosylation. In terms of biological role, subunit of STT3A-containing oligosaccharyl transferase (OST-A) complex that catalyzes the initial transfer of a defined glycan (Glc(3)Man(9)GlcNAc(2) in eukaryotes) from the lipid carrier dolichol-pyrophosphate to an asparagine residue within an Asn-X-Ser/Thr consensus motif in nascent polypeptide chains, the first step in protein N-glycosylation. N-glycosylation occurs cotranslationally and the complex associates with the Sec61 complex at the channel-forming translocon complex that mediates protein translocation across the endoplasmic reticulum (ER). Within the OST-A complex, acts as an adapter that anchors the OST-A complex to the Sec61 complex. May be involved in N-glycosylation of APP (amyloid-beta precursor protein). Can modulate gamma-secretase cleavage of APP by enhancing endoprotelysis of PSEN1. The sequence is that of Oligosaccharyltransferase complex subunit OSTC from Bos taurus (Bovine).